Consider the following 285-residue polypeptide: MNVFQIRDKLKQRLAHLNVDFKFDREEETLRIYRQDNYKGVTIKLNAIVAKYEVQKEKIIDEIVYYVEEAIAQMDDESIEKMTNIQIMPVIRATSFDKKTKEGHRFIIEKHTAETNIYYALDLGKSYRLIDESMLESLGLTEQQVKEMSLFNIRKLKNEYKTDEVKGNIFYFVNSNDGYDASRILNTKFLDDIYQQCEGEMLVAVPHQDVLVIADIRNKTGYDVMAHLTMEFFTKGLVPITSLSFGYEKGHFEPIFILGKNNKQKRDSNVIQRLEANRKRFNNKK.

It belongs to the UPF0354 family.

The sequence is that of UPF0354 protein SH1179 from Staphylococcus haemolyticus (strain JCSC1435).